The primary structure comprises 432 residues: Tyrosine--tRNA ligase (432 aa).

Tyr-35 lines the L-tyrosine pocket. Residues 40 to 49 (PTAGSLHVGH) carry the 'HIGH' region motif. L-tyrosine-binding residues include Tyr-175 and Gln-179. The 'KMSKS' region signature appears at 239-243 (KFGKT). Lys-242 is a binding site for ATP. The S4 RNA-binding domain occupies 365–422 (PPLVDLFASTGLVPSKSAARRTIQEGGAYLNNAKVTDIEARVSEADLLHGRYLVLRRG).

Belongs to the class-I aminoacyl-tRNA synthetase family. TyrS type 1 subfamily. As to quaternary structure, homodimer.

Its subcellular location is the cytoplasm. The catalysed reaction is tRNA(Tyr) + L-tyrosine + ATP = L-tyrosyl-tRNA(Tyr) + AMP + diphosphate + H(+). In terms of biological role, catalyzes the attachment of tyrosine to tRNA(Tyr) in a two-step reaction: tyrosine is first activated by ATP to form Tyr-AMP and then transferred to the acceptor end of tRNA(Tyr). This Thermobifida fusca (strain YX) protein is Tyrosine--tRNA ligase.